We begin with the raw amino-acid sequence, 448 residues long: Trk system potassium uptake protein TrkA homolog 2 (448 aa).

An RCK N-terminal 1 domain is found at 1-124 (MKAVVIGAGE…RAQVGVDIMI (124 aa)). Residues 7-11 (GAGEV), glutamate 29, 70-71 (TG), and arginine 101 contribute to the NAD(+) site. An RCK C-terminal 1 domain is found at 144 to 225 (IDAEMFAGGK…MADLENVFGN (82 aa)). The RCK N-terminal 2 domain occupies 230 to 348 (RNRILLIGCG…FEMVGIDIAV (119 aa)). 232 to 262 (RILLIGCGIVGFYLAKIIDKDENADLKVIEY) contacts NAD(+). The RCK C-terminal 2 domain occupies 368–448 (EALATIEGEK…AVRSVEKLFK (81 aa)).

Its function is as follows. Part of a potassium transport system. This Methanosarcina mazei (strain ATCC BAA-159 / DSM 3647 / Goe1 / Go1 / JCM 11833 / OCM 88) (Methanosarcina frisia) protein is Trk system potassium uptake protein TrkA homolog 2 (trkA2).